The chain runs to 216 residues: Large ribosomal subunit protein uL24m (216 aa).

A mitochondrion-targeting transit peptide spans 1–9 (MRLSALLAL). Residue serine 24 is modified to Phosphoserine. Residues 56 to 89 (LFCGDTVEILEGKDAGKQGKVVQVIRQRNWVVVG) enclose the KOW domain.

The protein belongs to the universal ribosomal protein uL24 family. Component of the mitochondrial large ribosomal subunit (mt-LSU). Mature mammalian 55S mitochondrial ribosomes consist of a small (28S) and a large (39S) subunit. The 28S small subunit contains a 12S ribosomal RNA (12S mt-rRNA) and 30 different proteins. The 39S large subunit contains a 16S rRNA (16S mt-rRNA), a copy of mitochondrial valine transfer RNA (mt-tRNA(Val)), which plays an integral structural role, and 52 different proteins.

Its subcellular location is the mitochondrion. In Homo sapiens (Human), this protein is Large ribosomal subunit protein uL24m (MRPL24).